The primary structure comprises 425 residues: Potassium/proton antiporter CemA (425 aa).

The chain crosses the membrane as a helical span at residues 89-109; that stretch reads LFLTTVKCLFILLFVPLGINF. The tract at residues 159-278 is insert; that stretch reads LSENQIFFGL…KTDFASVFRT (120 aa). Residues 173–192 form a disordered region; sequence STFPSSEKSQKSEHFSNQDE. A compositionally biased stretch (basic and acidic residues) spans 180–192; it reads KSQKSEHFSNQDE. 3 helical membrane passes run 300–320, 350–370, and 386–406; these read IEAI…CYLL, ILFI…ELFF, and IFLL…YLIF.

The protein belongs to the CemA family.

The protein localises to the plastid. Its subcellular location is the chloroplast inner membrane. It carries out the reaction K(+)(in) + H(+)(out) = K(+)(out) + H(+)(in). Its function is as follows. Contributes to K(+)/H(+) antiport activity by supporting proton efflux to control proton extrusion and homeostasis in chloroplasts in a light-dependent manner to modulate photosynthesis. Prevents excessive induction of non-photochemical quenching (NPQ) under continuous-light conditions. Indirectly promotes efficient inorganic carbon uptake into chloroplasts. The protein is Potassium/proton antiporter CemA of Tetradesmus obliquus (Green alga).